We begin with the raw amino-acid sequence, 235 residues long: Probable 2-phosphosulfolactate phosphatase (235 aa).

Belongs to the ComB family. It depends on Mg(2+) as a cofactor.

It carries out the reaction (2R)-O-phospho-3-sulfolactate + H2O = (2R)-3-sulfolactate + phosphate. The protein is Probable 2-phosphosulfolactate phosphatase of Clostridium novyi (strain NT).